A 66-amino-acid polypeptide reads, in one-letter code: MLNYIHQLVKPQRICTFASVAWTAQCTRVSSIHWRAGKSFTFQNQPKWKSLAFWRAQKAWLHSHNG.

This is an uncharacterized protein from Frog virus 3 (isolate Goorha) (FV-3).